We begin with the raw amino-acid sequence, 311 residues long: MALPIILDCDPGHDDAIAIVLALASPELDVKAITSSAGNQTPDKTLRNVLRMLTLLKRSDIPVAGGAVKPLMRELIIADNVHGESGLDGPALPEPSFAPQNCTAVELMAKTLRESPQPVTLVATGPQTNVALLLNSHPELHAKIARIVIMGGAMGLGNWTPAAEFNIYVDPEAAEIVFQSGIPVLMAGLDVTHKAQIHTADIERFRAIGNPISTIVAELLDFFLEYHKDEKWGFTGAPLHDPCTIAWLLKAELFTTVERWVGVETQGKYTQGMTVVDYYFLTGNKPNATVMVDVDREGFVDLLAERLKFYG.

Residue His-240 is part of the active site.

This sequence belongs to the IUNH family. RihA subfamily.

Hydrolyzes cytidine or uridine to ribose and cytosine or uracil, respectively. In Salmonella arizonae (strain ATCC BAA-731 / CDC346-86 / RSK2980), this protein is Pyrimidine-specific ribonucleoside hydrolase RihA.